A 105-amino-acid polypeptide reads, in one-letter code: Thioredoxin (105 aa).

The region spanning 1 to 105 (ATMTLTDANF…LEAQLADVLQ (105 aa)) is the Thioredoxin domain. The cysteines at positions 29 and 32 are disulfide-linked.

Functionally, participates in various redox reactions through the reversible oxidation of its active center dithiol to a disulfide and catalyzes dithiol-disulfide exchange reactions. In Alicyclobacillus acidocaldarius subsp. acidocaldarius (Bacillus acidocaldarius), this protein is Thioredoxin (trxA).